The following is a 502-amino-acid chain: Keratin, type II cytoskeletal 8 (502 aa).

Residues 1–98 (MSVRSTKVTY…DPSIQQVRTE (98 aa)) form a head region. 4 positions are modified to phosphoserine: Ser-13, Ser-26, Ser-37, and Ser-40. The tract at residues 99–134 (EKEQIKTLNNKFASFIDKVRFLEQQNKMLETKWNLL) is coil 1A. An IF rod domain is found at 99 to 410 (EKEQIKTLNN…KLLEGEESRL (312 aa)). The linker 1 stretch occupies residues 135–151 (QNQKTTRSNMDGMFEAY). Residues 152–243 (ISNLRRQLDG…QLYEEELREM (92 aa)) form a coil 1B region. The tract at residues 244–267 (QSQISDTSVVLSMDNNRSLDLDGI) is linker 12. Positions 268 to 406 (IAEVRAQYED…ATYRKLLEGE (139 aa)) are coil 2. The tract at residues 269–390 (AEVRAQYEDV…DYQELMNVKL (122 aa)) is necessary for interaction with PNN. Residues 407–502 (ESRLESGFQN…SESSDVFSKP (96 aa)) form a tail region. Residues Ser-425, Ser-428, Ser-436, and Ser-444 each carry the phosphoserine modification.

The protein belongs to the intermediate filament family. Heterotetramer of two type I and two type II keratins. Keratin-8 associates with keratin-18. Expressed in oocytes, eggs, embryos, liver and intestinal mucosa.

It localises to the cytoplasm. It is found in the nucleus. Its subcellular location is the nucleoplasm. The protein resides in the nucleus matrix. Together with KRT19, helps to link the contractile apparatus to dystrophin at the costameres of striated muscle. This chain is Keratin, type II cytoskeletal 8, found in Xenopus laevis (African clawed frog).